Reading from the N-terminus, the 181-residue chain is Prepronociceptin (181 aa).

Positions 1-19 (MKILFCDVLLLSLLSSVFS) are cleaved as a signal peptide. The propeptide occupies 20–95 (SCPEDCLTCQ…QSKASEMQHL (76 aa)). The interval 103-125 (SVVQARDAEPEADAEPVADEADE) is disordered. 2 repeat units span residues 109 to 114 (DAEPEA) and 115 to 120 (DAEPVA). The interval 109–120 (DAEPEADAEPVA) is 2 X 6 AA tandem repeats of D-A-E-P-X-A. Acidic residues predominate over residues 112–125 (PEADAEPVADEADE). Positions 174–181 (TLHQNGNV) are excised as a propeptide.

It belongs to the opioid neuropeptide precursor family. In terms of processing, specific enzymatic cleavages at paired basic residues probably yield other active peptides besides nociceptin. The N-terminal domain contains 6 conserved cysteines thought to be involved in disulfide bonding and/or processing. In terms of tissue distribution, expressed predominantly in the spinal cord and brain, being more abundant in the hypothalamus and striatum. Also found in small amounts in ovary.

The protein resides in the secreted. In terms of biological role, ligand of the opioid receptor-like receptor OPRL1. It may act as a transmitter in the brain by modulating nociceptive and locomotor behavior. May be involved in neuronal differentiation and development. Its function is as follows. Blocks nociceptin action in pain transmission by inhibiting nociceptin-induced hyperalgesia and allodynia. Functionally, has potent analgesic activity. The chain is Prepronociceptin (Pnoc) from Rattus norvegicus (Rat).